The chain runs to 375 residues: MADNAHLRGTGVVQQENNGFGPLSKRRGNTATVTSAIVFVISGALLLLAVRKEKATSEGIHFLVFTAALLTLSFVLGELVRRFCLVSEELKHRHARYQGNWKGVLKTTFTFDNAGSILVVAISSALTLCFVLYEQYEAFSGPGYPILFFLNCLVVPQLSFLVGLRQLSPVETSDLNEKENKNVADGLAWSYYFGYLKLVLPRLGDRIAESDTYRHKITVEKLFILLPKTCYTFDAITKADPRVKWAGKLPASKINRAGILERSYQHAVHRIEMPLPDGTVEEYHFVLEYATPLMSLYEMSDHAKAPLTGPERDHQVVLFIRKLKEILDDSEECRGKYELVPISGNDTNKIADVLVGMHGAASIDLEDETDEQTKQ.

Helical transmembrane passes span Thr-30–Val-50, Ile-60–Val-80, Ala-114–Glu-134, and Tyr-144–Leu-164. Residues Tyr-195, Arg-256, and Arg-262 each contribute to the 2',3'-cGAMP site.

This sequence belongs to the STING family.

It is found in the membrane. In terms of biological role, facilitator of innate immune signaling that acts as a sensor of second messenger signals produced by cyclic GMP-AMP synthase-like receptors (cGLRs) and promotes the production of type I interferon. Innate immune response is triggered in response to nucleotides from viruses and bacteria delivered to the cytoplasm. Acts by binding cyclic dinucleotides: recognizes and binds 2'-3' linked cGAMP (2'-3'-cGAMP), a second messengers produced by cGLRs in response to nucleotides in the cytosol, such as double-stranded RNA (dsRNA). Upon binding to 2'-3'-cGAMP, oligomerizes and promotes the recruitment and subsequent activation of the transcription factor IRF3 to induce expression of type I interferon. In Stylophora pistillata (Smooth cauliflower coral), this protein is Stimulator of interferon genes protein 2.